The primary structure comprises 110 residues: MSGVWVFKNGVIRLVENPNQSGSDTQNRRKVMVYLPTGEVVSSYSTLEQILQSLGWERYFGGGDTDLLQFHKRSSIDLISLPRDFTKFNSVYMYDIVVKNPNYFHVRDSH.

Belongs to the FPF1 family.

Modulates the competence to flowering of apical meristems. Involved in a GA-dependent response in apical meristems during the transition to flowering. The sequence is that of Flowering-promoting factor 1 (FPF1) from Arabidopsis thaliana (Mouse-ear cress).